A 414-amino-acid chain; its full sequence is Tryptophan synthase beta chain (414 aa).

Over residues 1 to 26 (MVSTFSRKDQNYKNDDLNQPSKEGRF) the composition is skewed to basic and acidic residues. Positions 1–27 (MVSTFSRKDQNYKNDDLNQPSKEGRFG) are disordered. The residue at position 109 (K109) is an N6-(pyridoxal phosphate)lysine.

Belongs to the TrpB family. Tetramer of two alpha and two beta chains. Requires pyridoxal 5'-phosphate as cofactor.

It carries out the reaction (1S,2R)-1-C-(indol-3-yl)glycerol 3-phosphate + L-serine = D-glyceraldehyde 3-phosphate + L-tryptophan + H2O. It functions in the pathway amino-acid biosynthesis; L-tryptophan biosynthesis; L-tryptophan from chorismate: step 5/5. Functionally, the beta subunit is responsible for the synthesis of L-tryptophan from indole and L-serine. This is Tryptophan synthase beta chain from Prochlorococcus marinus (strain MIT 9301).